The chain runs to 104 residues: L-rhamnose mutarotase (104 aa).

Position 18 (tyrosine 18) interacts with substrate. Catalysis depends on histidine 22, which acts as the Proton donor. Substrate contacts are provided by residues tyrosine 41 and 76-77 (WW).

Belongs to the rhamnose mutarotase family. As to quaternary structure, homodimer.

It is found in the cytoplasm. It carries out the reaction alpha-L-rhamnose = beta-L-rhamnose. It functions in the pathway carbohydrate metabolism; L-rhamnose metabolism. Involved in the anomeric conversion of L-rhamnose. In Tolumonas auensis (strain DSM 9187 / NBRC 110442 / TA 4), this protein is L-rhamnose mutarotase.